The following is a 231-amino-acid chain: Dephospho-CoA kinase domain-containing protein (231 aa).

The 205-residue stretch at 3–207 (LVGLTGGIAS…RSLEYLPLRF (205 aa)) folds into the DPCK domain. Position 8–15 (8–15 (GGIASGKS)) interacts with ATP.

It belongs to the CoaE family.

The protein is Dephospho-CoA kinase domain-containing protein (DCAKD) of Homo sapiens (Human).